Reading from the N-terminus, the 523-residue chain is MQLPKELKYAAIAGGVALFGLIFGWVLFPTILKSQLKKEMALSKKTDVRKMWEKIPFALDFKVYIFNFTNAEEVQKGATPILKEIGPYHFDEWKEKVEVEDHEEDDTITYKKRDVFYFNPEMSGPGLTGEEIVVIPHIFMLGMALTVARDKPAMLNMVGKAMNGIFDDPPDIFLRVKALDILFRGMIINCARTEFAPKATCTALKKEAVSGLVLEPNNQFRFSIFGTRNNTIDPHVITVKRGIKNVMDVGQVVAVDGKLEQTIWRDTCNEYQGTDGTVFPPFVPETERIQSFSTDLCRTFKPWYQKKTSYRGIKTNRYVANIGDFANDPELNCFCPKPDSCPPKGLMDLAPCMKAPMYASMPHFLDSDPELLTKVKGLNPDVTQHGIEIDYEPITGTPMVAKQRIQFNIQLLKTDKLDLFKDLSGDIVPLFWIDEGLALNKTFVNMLKHQLFIPKRVVGVLRWWVVSFGSLGAVIGIVFHFRDHIMRLAVSGDTKVSKVTPEEPEQKDISVIGQAQEPAKVNI.

Residues 1–11 (MQLPKELKYAA) are Cytoplasmic-facing. Residues 12–32 (IAGGVALFGLIFGWVLFPTIL) form a helical membrane-spanning segment. Topologically, residues 33–458 (KSQLKKEMAL…HQLFIPKRVV (426 aa)) are extracellular. N-linked (GlcNAc...) asparagine glycans are attached at residues N67 and N229. Cystine bridges form between C268-C333, C297-C352, and C335-C341. Residue N440 is glycosylated (N-linked (GlcNAc...) asparagine). A helical transmembrane segment spans residues 459-479 (GVLRWWVVSFGSLGAVIGIVF). Topologically, residues 480-523 (HFRDHIMRLAVSGDTKVSKVTPEEPEQKDISVIGQAQEPAKVNI) are cytoplasmic.

It belongs to the CD36 family. In terms of tissue distribution, detected in sensory neurons in the antenna.

The protein localises to the cell membrane. Plays an olfactory role that is not restricted to pheromone sensitivity. The chain is Sensory neuron membrane protein 1 from Heliothis virescens (Tobacco budworm moth).